Reading from the N-terminus, the 638-residue chain is Zinc finger protein 143 (638 aa).

At methionine 1 the chain carries N-acetylmethionine. Lysine 213 participates in a covalent cross-link: Glycyl lysine isopeptide (Lys-Gly) (interchain with G-Cter in SUMO2). C2H2-type zinc fingers lie at residues 237–261, 267–291, 297–321, and 327–351; these read FRCEYDGCGKLYTTAHHLKVHERSH, YQCEHAGCGKAFATGYGLKSHVRTH, YRCSEDNCTKSFKTSGDLQKHIRTH, and FKCPFEGCGRSFTTSNIRKVHVRTH. Threonine 352 carries the post-translational modification Phosphothreonine. C2H2-type zinc fingers lie at residues 357–381, 387–411, and 417–440; these read YYCTEPGCGRAFASATNYKNHVRIH, YVCTVPGCDKRFTEYSSLYKHHVVH, and YNCNHCGKTYKQISTLAMHKRTAH. A Glycyl lysine isopeptide (Lys-Gly) (interchain with G-Cter in SUMO2) cross-link involves residue lysine 406.

The protein belongs to the GLI C2H2-type zinc-finger protein family. In terms of assembly, interacts with CHD8. Forms a complex with HCFC1 and ZNF143. In terms of tissue distribution, expressed in all tissues tested, with the strongest expression in ovary.

Its subcellular location is the nucleus. In terms of biological role, transcriptional activator. Activates the gene for selenocysteine tRNA (tRNAsec). Binds to the SPH motif of small nuclear RNA (snRNA) gene promoters. Participates in efficient U6 RNA polymerase III transcription via its interaction with CHD8. In complex with HCFC1 and ZNF143, regulates the expression of several genes, including AP2S1, ESCO2, OPHN1, RBL1, UBXN8 and ZNF32. The chain is Zinc finger protein 143 (ZNF143) from Homo sapiens (Human).